The primary structure comprises 88 residues: Centromere protein W (88 aa).

This sequence belongs to the CENP-W/WIP1 family. Heterodimer with CENPT; this dimer coassembles with CENPS-CENPX heterodimers at centromeres to form the tetrameric CENP-T-W-S-X complex, which is a subcomplex of the large constitutive centromere-associated network (CCAN, also known as the interphase centromere complex or ICEN). Interacts with NPM1. In terms of tissue distribution, highly expressed in ovary, liver, lung and pancreas and to a lower extent in breast and gastrointestinal tract cancers; such as those of the colon, rectum and stomach. Overexpressed in high grade breast invasive tumors. Expressed in many cancer cell types.

Its subcellular location is the nucleus. The protein localises to the chromosome. It is found in the centromere. The protein resides in the kinetochore. It localises to the nucleus matrix. Its subcellular location is the nucleolus. In terms of biological role, component of the CENPA-NAC (nucleosome-associated) complex, a complex that plays a central role in assembly of kinetochore proteins, mitotic progression and chromosome segregation. The CENPA-NAC complex recruits the CENPA-CAD (nucleosome distal) complex and may be involved in incorporation of newly synthesized CENPA into centromeres. Part of a nucleosome-associated complex that binds specifically to histone H3-containing nucleosomes at the centromere, as opposed to nucleosomes containing CENPA. Component of the heterotetrameric CENP-T-W-S-X complex that binds and supercoils DNA, and plays an important role in kinetochore assembly. CENPW has a fundamental role in kinetochore assembly and function. It is one of the inner kinetochore proteins, with most further proteins binding downstream. Required for normal chromosome organization and normal progress through mitosis. The chain is Centromere protein W (CENPW) from Homo sapiens (Human).